Here is a 279-residue protein sequence, read N- to C-terminus: MTLLRGDDFFTSRAVTVAVEPRTPQTAFPEHYHDFWEIVLVEQGAGVHVFNDQPYALCSGSVFFVRDNDRHLFEDVEGLCLTNMLYRSPRGFRFLSDIAAFLPYGPNGEWQGQWQVNAAGMQQLKQSLNSLAELAQSDAPEAIAASESLFLHILVQLRQQCFQTQSSGSERQGVQALLGWLQNNYSEEVNWGSLADRFSLPLRTLHRQLKQHTGMTPQRYLNRLRLLEARRRLQQSDDSITTIAHACGFSDSNHFSTQFRKAFSQAPKSLRHQAFSREE.

Residues 175 to 273 (QALLGWLQNN…SQAPKSLRHQ (99 aa)) form the HTH araC/xylS-type domain. 2 DNA-binding regions (H-T-H motif) span residues 192–213 (GSLA…KQHT) and 240–263 (ITTI…RKAF).

In terms of assembly, binds DNA as a dimer.

The protein localises to the cytoplasm. Functionally, activates expression of the rhaBAD and rhaT operons. In Pectobacterium carotovorum subsp. carotovorum (strain PC1), this protein is HTH-type transcriptional activator RhaS.